We begin with the raw amino-acid sequence, 217 residues long: Protein-L-isoaspartate O-methyltransferase (217 aa).

Residue S61 is part of the active site.

Belongs to the methyltransferase superfamily. L-isoaspartyl/D-aspartyl protein methyltransferase family.

Its subcellular location is the cytoplasm. It catalyses the reaction [protein]-L-isoaspartate + S-adenosyl-L-methionine = [protein]-L-isoaspartate alpha-methyl ester + S-adenosyl-L-homocysteine. Its function is as follows. Catalyzes the methyl esterification of L-isoaspartyl residues in peptides and proteins that result from spontaneous decomposition of normal L-aspartyl and L-asparaginyl residues. It plays a role in the repair and/or degradation of damaged proteins. The polypeptide is Protein-L-isoaspartate O-methyltransferase (Syntrophotalea carbinolica (strain DSM 2380 / NBRC 103641 / GraBd1) (Pelobacter carbinolicus)).